The primary structure comprises 366 residues: Cytochrome c mitochondrial import factor CYC2 (366 aa).

The transit peptide at 1–50 (MLWKNYVLSSSRITRRLHKSPRKSSFSKNFFITGCLLTVGAVSSYLTYRY) directs the protein to the mitochondrion. The FAD-binding FR-type domain maps to 63 to 184 (SYFVKYKISH…RGPFIDYEFP (122 aa)).

Requires FAD as cofactor.

It localises to the mitochondrion inner membrane. Functionally, redox component that participates in c-type cytochrome biogenesis in the mitochondrial intermembrane space. May play a role in the reduction of heme prior to its ligation to apocytochrome c by cytochrome c heme lyase. Has oxidoreductase activity in vitro. The polypeptide is Cytochrome c mitochondrial import factor CYC2 (CYC2) (Saccharomyces cerevisiae (strain ATCC 204508 / S288c) (Baker's yeast)).